The sequence spans 415 residues: Putative competence-damage inducible protein (415 aa).

The protein belongs to the CinA family.

The polypeptide is Putative competence-damage inducible protein (Listeria welshimeri serovar 6b (strain ATCC 35897 / DSM 20650 / CCUG 15529 / CIP 8149 / NCTC 11857 / SLCC 5334 / V8)).